We begin with the raw amino-acid sequence, 604 residues long: Beta-(1--&gt;2)glucan export ATP-binding/permease protein NdvA (604 aa).

In terms of domain architecture, ABC transmembrane type-1 spans 21-311 (GWILAFANLL…VVSFINSVFM (291 aa)). The next 6 membrane-spanning stretches (helical) occupy residues 22–42 (WILAFANLLLAGAQFAEPVLF), 68–88 (LLGAWVAFGLFTILCSAAVAL), 146–166 (EHFAAILSLVVLLPLALYINW), 168–188 (LAILLFILCVVFTVLTTLVVH), 238–258 (LLALQMPVLSWWALVTVITRA), and 285–305 (IVMFVSFATLLIQKLEQVVSF). The 235-residue stretch at 345–579 (VEFKDVSFSY…QGHFAALARA (235 aa)) folds into the ABC transporter domain. 378 to 385 (GATGAGKS) serves as a coordination point for ATP.

This sequence belongs to the ABC transporter superfamily. Beta-(1--&gt;2)glucan exporter (TC 3.A.1.108.1) family. Homodimer.

It is found in the cell inner membrane. It catalyses the reaction [(1-&gt;2)-beta-D-glucosyl](n)(in) + ATP + H2O = [(1-&gt;2)-beta-D-glucosyl](n)(out) + ADP + phosphate + H(+). Involved in beta-(1--&gt;2)glucan export. Transmembrane domains (TMD) form a pore in the inner membrane and the ATP-binding domain (NBD) is responsible for energy generation. The sequence is that of Beta-(1--&gt;2)glucan export ATP-binding/permease protein NdvA from Rhodopseudomonas palustris (strain BisB18).